The primary structure comprises 285 residues: 2-dehydro-3-deoxyphosphooctonate aldolase (285 aa).

The protein belongs to the KdsA family.

The protein localises to the cytoplasm. It catalyses the reaction D-arabinose 5-phosphate + phosphoenolpyruvate + H2O = 3-deoxy-alpha-D-manno-2-octulosonate-8-phosphate + phosphate. The protein operates within carbohydrate biosynthesis; 3-deoxy-D-manno-octulosonate biosynthesis; 3-deoxy-D-manno-octulosonate from D-ribulose 5-phosphate: step 2/3. It functions in the pathway bacterial outer membrane biogenesis; lipopolysaccharide biosynthesis. The chain is 2-dehydro-3-deoxyphosphooctonate aldolase from Acidovorax ebreus (strain TPSY) (Diaphorobacter sp. (strain TPSY)).